Reading from the N-terminus, the 740-residue chain is Ion-translocating oxidoreductase complex subunit C (740 aa).

2 4Fe-4S ferredoxin-type domains span residues 369-397 and 407-436; these read GEPQ…QQLY and KATT…VQYF. [4Fe-4S] cluster-binding residues include C377, C380, C383, C387, C416, C419, C422, and C426. Positions 602-684 are disordered; it reads KLEQQQANAE…EPEEQVDPRK (83 aa). Low complexity-rich tracts occupy residues 605–615 and 637–647; these read QQQANAEPEQQ.

The protein belongs to the 4Fe4S bacterial-type ferredoxin family. RnfC subfamily. In terms of assembly, the complex is composed of six subunits: RsxA, RsxB, RsxC, RsxD, RsxE and RsxG. Requires [4Fe-4S] cluster as cofactor.

It localises to the cell inner membrane. In terms of biological role, part of a membrane-bound complex that couples electron transfer with translocation of ions across the membrane. Required to maintain the reduced state of SoxR. This chain is Ion-translocating oxidoreductase complex subunit C, found in Escherichia coli O7:K1 (strain IAI39 / ExPEC).